The chain runs to 916 residues: Bifunctional aspartokinase/homoserine dehydrogenase 2, chloroplastic (916 aa).

A chloroplast-targeting transit peptide spans 1–87 (MATLKPSFTV…VDQVQIPKGE (87 aa)). Residues 88–336 (MWSVHKFGGT…VNEAVILQTL (249 aa)) form an aspartokinase region. Residues 337–562 (SYQEAWEMSY…LSRTTLAMGI (226 aa)) are interface. ACT domains are found at residues 412–487 (VEGT…VIPN) and 493–570 (AVGQ…LIGA). The segment at 563 to 916 (VGPGLIGATL…RLASYLGAPS (354 aa)) is homoserine dehydrogenase. An NAD(+)-binding site is contributed by Ile-568. Residues Ile-568, Lys-600, Thr-649, and Lys-673 each contribute to the NADP(+) site. Ile-568 provides a ligand contact to NADPH. Residue Thr-649 coordinates NAD(+). 2 residues coordinate NADPH: Thr-649 and Lys-673. Na(+) is bound by residues Glu-700, Val-703, Ala-705, and Leu-707. NADP(+) contacts are provided by Gly-758 and Glu-761. The L-homoserine site is built by Glu-761 and Asp-772. The active-site Proton donor is the Lys-776. NAD(+) is bound at residue Gly-893. Residue Gly-893 participates in NADP(+) binding. Gly-893 provides a ligand contact to NADPH.

This sequence in the N-terminal section; belongs to the aspartokinase family. The protein in the C-terminal section; belongs to the homoserine dehydrogenase family. As to quaternary structure, homo- or heterodimer. A metal cation is required as a cofactor.

The protein resides in the plastid. It localises to the chloroplast. It catalyses the reaction L-homoserine + NADP(+) = L-aspartate 4-semialdehyde + NADPH + H(+). The catalysed reaction is L-homoserine + NAD(+) = L-aspartate 4-semialdehyde + NADH + H(+). The enzyme catalyses L-aspartate + ATP = 4-phospho-L-aspartate + ADP. It functions in the pathway amino-acid biosynthesis; L-lysine biosynthesis via DAP pathway; (S)-tetrahydrodipicolinate from L-aspartate: step 1/4. It participates in amino-acid biosynthesis; L-methionine biosynthesis via de novo pathway; L-homoserine from L-aspartate: step 1/3. Its pathway is amino-acid biosynthesis; L-methionine biosynthesis via de novo pathway; L-homoserine from L-aspartate: step 3/3. The protein operates within amino-acid biosynthesis; L-threonine biosynthesis; L-threonine from L-aspartate: step 1/5. It functions in the pathway amino-acid biosynthesis; L-threonine biosynthesis; L-threonine from L-aspartate: step 3/5. With respect to regulation, threonine interaction with Gln-443 leads to inhibition of aspartate kinase activity and facilitates the binding of a second threonine on Gln-524, leading to a partial inhibition of homoserine dehydrogenase activity (25% of activity remaining at saturation with threonine). Homoserine dehydrogenase activity is also partially inhibited by cysteine (15% of activity remaining at saturation with cysteine). No synergy between threonine and cysteine for the inhibition. 13-fold activation of aspartate kinase activity by cysteine, isoleucine, valine, serine and alanine at 2.5 mM and 4-fold activation by leucine at 2.5 mM, but no activation of homoserine dehydrogenase activity. Its function is as follows. Bifunctional aspartate kinase and homoserine dehydrogenase that catalyzes the first and the third steps toward the synthesis of lysine, methionine and threonine from aspartate. The sequence is that of Bifunctional aspartokinase/homoserine dehydrogenase 2, chloroplastic (AKHSDH2) from Arabidopsis thaliana (Mouse-ear cress).